Here is a 168-residue protein sequence, read N- to C-terminus: Putative gustatory receptor clone PTE03 (168 aa).

Residues 1–25 lie on the Extracellular side of the membrane; that stretch reads TTVPKMLINLQKQNKAISYAGCITQ. C22 and C104 are joined by a disulfide. A helical membrane pass occupies residues 26–45; sequence LSFVLLFAGMENFLLAAMAY. The Cytoplasmic segment spans residues 46-67; it reads DRYVAICKPLRYTAIMKAHLCL. A helical membrane pass occupies residues 68-88; it reads VMTLLSLCISIVDALLHGLMI. Residues 89–121 are Extracellular-facing; the sequence is LRLSFCTFLEIPHYFCELYQVIKLSCSDTLINN. A helical membrane pass occupies residues 122 to 143; sequence ILVYTMTSTLGGVPLGGIIFSY. Residues 144 to 165 lie on the Cytoplasmic side of the membrane; it reads FKIISSILRMPSSGSRHRAFST. The chain crosses the membrane as a helical span at residues 166 to 168; it reads CGS.

The protein belongs to the G-protein coupled receptor 1 family. As to expression, tongue specific.

The protein localises to the cell membrane. In terms of biological role, possible taste receptor. In Rattus norvegicus (Rat), this protein is Putative gustatory receptor clone PTE03 (Olr1145).